A 218-amino-acid polypeptide reads, in one-letter code: Phosphoglycolate phosphatase (218 aa).

Asp-7 serves as the catalytic Nucleophile. Residues Asp-7, Asp-9, and Asp-167 each contribute to the Mg(2+) site.

The protein belongs to the HAD-like hydrolase superfamily. CbbY/CbbZ/Gph/YieH family. The cofactor is Mg(2+).

It catalyses the reaction 2-phosphoglycolate + H2O = glycolate + phosphate. Its pathway is organic acid metabolism; glycolate biosynthesis; glycolate from 2-phosphoglycolate: step 1/1. In terms of biological role, specifically catalyzes the dephosphorylation of 2-phosphoglycolate. Is involved in the dissimilation of the intracellular 2-phosphoglycolate formed during the DNA repair of 3'-phosphoglycolate ends, a major class of DNA lesions induced by oxidative stress. The sequence is that of Phosphoglycolate phosphatase from Cereibacter sphaeroides (strain ATCC 17029 / ATH 2.4.9) (Rhodobacter sphaeroides).